Consider the following 636-residue polypeptide: uncharacterized protein (636 aa).

Residues 10–36 (CLACRRKKVKCNRQYPCTRCLKYGEAC) constitute a DNA-binding region (zn(2)-C6 fungal-type). Residues 556-580 (NSQSTSEFVSPISDTENGSSSQQVS) are compositionally biased toward polar residues. Positions 556–581 (NSQSTSEFVSPISDTENGSSSQQVSE) are disordered.

The protein localises to the cytoplasm. It is found in the nucleus. This is an uncharacterized protein from Schizosaccharomyces pombe (strain 972 / ATCC 24843) (Fission yeast).